The chain runs to 138 residues: Large ribosomal subunit protein uL16 (138 aa).

This sequence belongs to the universal ribosomal protein uL16 family. Part of the 50S ribosomal subunit.

Functionally, binds 23S rRNA and is also seen to make contacts with the A and possibly P site tRNAs. The protein is Large ribosomal subunit protein uL16 of Gluconacetobacter diazotrophicus (strain ATCC 49037 / DSM 5601 / CCUG 37298 / CIP 103539 / LMG 7603 / PAl5).